The primary structure comprises 592 residues: Methylenetetrahydrofolate reductase (NADH) 1 (592 aa).

The Proton donor/acceptor role is filled by glutamate 21. NAD(+) contacts are provided by residues 21-26 and 52-53; these read EFFPPK and TW. FAD-binding positions include 52–53, histidine 81, 111–113, tyrosine 153, 157–160, aspartate 175, and lysine 182; these read TW, RGD, and HPDV. Aspartate 113 is a binding site for substrate. Glutamine 193 and tyrosine 285 together coordinate substrate.

It belongs to the methylenetetrahydrofolate reductase family. Homodimer. Requires FAD as cofactor.

The enzyme catalyses (6S)-5-methyl-5,6,7,8-tetrahydrofolate + NAD(+) = (6R)-5,10-methylene-5,6,7,8-tetrahydrofolate + NADH + H(+). It functions in the pathway one-carbon metabolism; tetrahydrofolate interconversion. Plant MTHFRs strongly prefer NADH over NADPH. Not inhibited by methionine or S-adenosylmethionine. The probable reversibility of the MTHFR reaction in plants suggests that they can metabolize the methyl group of 5,10-methylenetetrahydrofolate to serine, sugars and starch. This Arabidopsis thaliana (Mouse-ear cress) protein is Methylenetetrahydrofolate reductase (NADH) 1 (MTHFR1).